A 211-amino-acid chain; its full sequence is Degradation in the endoplasmic reticulum protein 1 (211 aa).

Met-1 bears the N-acetylmethionine mark. The Cytoplasmic portion of the chain corresponds to 1-14 (MDAVILNLLGDIPL). Residues 15 to 32 (VTRLWTIGCLVLSGLTSL) traverse the membrane as a helical segment. The Lumenal portion of the chain corresponds to 33 to 67 (RIVDPGKVVYSYDLVFKKGQYGRLLYSIFDYGAFN). Residues 68-85 (WISMINIFVSANHLSTLE) form a helical membrane-spanning segment. At 86–92 (NSFNLRR) the chain is on the cytoplasmic side. The chain crosses the membrane as a helical span at residues 93 to 109 (KFCWIIFLLLVILVKMT). At 110–117 (SIEQPAAS) the chain is on the lumenal side. The helical transmembrane segment at 118–133 (LGVLLHENLVYYELKK) threads the bilayer. Residues 134–149 (NGNQMNVRFFGAIDVS) are Cytoplasmic-facing. The helical transmembrane segment at 150–165 (PSIFPIYMNAVMYFVY) threads the bilayer. The Lumenal segment spans residues 166–168 (KRS). The chain crosses the membrane as a helical span at residues 169 to 189 (WLEIAMNFMPGHVIYYMDDII). Topologically, residues 190 to 211 (GKIYGIDLCKSPYDWFRNTETP) are cytoplasmic.

This sequence belongs to the derlin family. As to quaternary structure, component of the HRD1 ubiquitin ligase complex which contains the E3 ligase HRD1, its cofactors HRD3, USA1 and DER1, substrate recruiting factor YOS9 and CDC48-binding protein UBX2. Within the complex, interacts with USA1 (via C-terminus). In ERAD-L, HRD3 and YOS9 jointly bind misfolded glycoproteins in the endoplasmic reticulum (ER) lumen. Movement of ERAD-L substrates through the ER membrane is facilitated by HRD1 and DER1 which have lateral gates facing each other and which distort the membrane region between the lateral gates, making it much thinner than a normal phospholipid bilayer. Substrates insert into the membrane as a hairpin loop with one strand interacting with DER1 and the other with HRD1. The HRD1 complex interacts with the heterotrimeric CDC48-NPL4-UFD1 ATPase complex which is recruited by UBX2 via its interaction with CDC48 and which moves ubiquitinated substrates to the cytosol for targeting to the proteasome. N-terminally acetylated by acetyltransferase NatB which enhances DER1 stability and is required for ERAD-L function.

Its subcellular location is the endoplasmic reticulum membrane. Component of the endoplasmic reticulum-associated degradation (ERAD) pathway. Specifically required for the ERAD-L pathway which mediates the degradation of proteins with misfolded lumenal domains within the endoplasmic reticulum (ER). Facilitates retrotranslocation of misfolded proteins from the ER lumen through the ER membrane in conjunction with HRD1. Both proteins have lateral gates facing each other and distort the membrane region between the lateral gates, making it much thinner than a normal phospholipid bilayer. Substrates insert into the membrane as a hairpin loop with one strand interacting with DER1 and the other with HRD1. The protein is Degradation in the endoplasmic reticulum protein 1 (DER1) of Saccharomyces cerevisiae (strain ATCC 204508 / S288c) (Baker's yeast).